A 347-amino-acid chain; its full sequence is Adenine deaminase (347 aa).

Residues His-16, His-18, and His-204 each coordinate Zn(2+). Glu-207 functions as the Proton donor in the catalytic mechanism. Asp-285 contributes to the Zn(2+) binding site. Asp-286 lines the substrate pocket.

Belongs to the metallo-dependent hydrolases superfamily. Adenosine and AMP deaminases family. Adenine deaminase type 2 subfamily. Requires Zn(2+) as cofactor.

It is found in the cytoplasm. It localises to the nucleus. The enzyme catalyses adenine + H2O + H(+) = hypoxanthine + NH4(+). In terms of biological role, catalyzes the hydrolytic deamination of adenine to hypoxanthine. Plays an important role in the purine salvage pathway and in nitrogen catabolism. This Candida glabrata (strain ATCC 2001 / BCRC 20586 / JCM 3761 / NBRC 0622 / NRRL Y-65 / CBS 138) (Yeast) protein is Adenine deaminase.